The following is a 249-amino-acid chain: Enolase-phosphatase E1 (249 aa).

Mg(2+) contacts are provided by Asp14 and Glu16. Substrate contacts are provided by residues 141–142 (SS) and Lys175. Asp200 is a binding site for Mg(2+).

The protein belongs to the HAD-like hydrolase superfamily. MasA/MtnC family. Monomer. Mg(2+) is required as a cofactor.

It localises to the cytoplasm. Its subcellular location is the nucleus. It catalyses the reaction 5-methylsulfanyl-2,3-dioxopentyl phosphate + H2O = 1,2-dihydroxy-5-(methylsulfanyl)pent-1-en-3-one + phosphate. The protein operates within amino-acid biosynthesis; L-methionine biosynthesis via salvage pathway; L-methionine from S-methyl-5-thio-alpha-D-ribose 1-phosphate: step 3/6. It functions in the pathway amino-acid biosynthesis; L-methionine biosynthesis via salvage pathway; L-methionine from S-methyl-5-thio-alpha-D-ribose 1-phosphate: step 4/6. In terms of biological role, bifunctional enzyme that catalyzes the enolization of 2,3-diketo-5-methylthiopentyl-1-phosphate (DK-MTP-1-P) into the intermediate 2-hydroxy-3-keto-5-methylthiopentenyl-1-phosphate (HK-MTPenyl-1-P), which is then dephosphorylated to form the acireductone 1,2-dihydroxy-3-keto-5-methylthiopentene (DHK-MTPene). The protein is Enolase-phosphatase E1 of Drosophila mojavensis (Fruit fly).